The following is a 204-amino-acid chain: Holliday junction branch migration complex subunit RuvA (204 aa).

The interval 1–64 is domain I; that stretch reads MIAQLKGSLA…EDAFLLYGFH (64 aa). Residues 65 to 143 form a domain II region; that stretch reads SESQRKVFNL…ALPMAAPTTA (79 aa). The flexible linker stretch occupies residues 144 to 154; sequence IGAATMAANPA. A domain III region spans residues 154 to 204; it reads AGLREEVASALLNLGYKPPQVDAALAKLFSAGEITDISVALKGALKLLAPA.

This sequence belongs to the RuvA family. In terms of assembly, homotetramer. Forms an RuvA(8)-RuvB(12)-Holliday junction (HJ) complex. HJ DNA is sandwiched between 2 RuvA tetramers; dsDNA enters through RuvA and exits via RuvB. An RuvB hexamer assembles on each DNA strand where it exits the tetramer. Each RuvB hexamer is contacted by two RuvA subunits (via domain III) on 2 adjacent RuvB subunits; this complex drives branch migration. In the full resolvosome a probable DNA-RuvA(4)-RuvB(12)-RuvC(2) complex forms which resolves the HJ.

It is found in the cytoplasm. In terms of biological role, the RuvA-RuvB-RuvC complex processes Holliday junction (HJ) DNA during genetic recombination and DNA repair, while the RuvA-RuvB complex plays an important role in the rescue of blocked DNA replication forks via replication fork reversal (RFR). RuvA specifically binds to HJ cruciform DNA, conferring on it an open structure. The RuvB hexamer acts as an ATP-dependent pump, pulling dsDNA into and through the RuvAB complex. HJ branch migration allows RuvC to scan DNA until it finds its consensus sequence, where it cleaves and resolves the cruciform DNA. The polypeptide is Holliday junction branch migration complex subunit RuvA (Magnetococcus marinus (strain ATCC BAA-1437 / JCM 17883 / MC-1)).